Reading from the N-terminus, the 313-residue chain is Ribonuclease Z (313 aa).

Histidine 62, histidine 64, aspartate 66, histidine 67, histidine 142, aspartate 212, and histidine 270 together coordinate Zn(2+). The active-site Proton acceptor is aspartate 66.

The protein belongs to the RNase Z family. Homodimer. Requires Zn(2+) as cofactor.

It catalyses the reaction Endonucleolytic cleavage of RNA, removing extra 3' nucleotides from tRNA precursor, generating 3' termini of tRNAs. A 3'-hydroxy group is left at the tRNA terminus and a 5'-phosphoryl group is left at the trailer molecule.. Its function is as follows. Zinc phosphodiesterase, which displays some tRNA 3'-processing endonuclease activity. Probably involved in tRNA maturation, by removing a 3'-trailer from precursor tRNA. This is Ribonuclease Z from Cytophaga hutchinsonii (strain ATCC 33406 / DSM 1761 / CIP 103989 / NBRC 15051 / NCIMB 9469 / D465).